A 495-amino-acid polypeptide reads, in one-letter code: Galactose-1-phosphate uridylyltransferase (495 aa).

This sequence belongs to the galactose-1-phosphate uridylyltransferase type 2 family.

It is found in the cytoplasm. It carries out the reaction alpha-D-galactose 1-phosphate + UDP-alpha-D-glucose = alpha-D-glucose 1-phosphate + UDP-alpha-D-galactose. It functions in the pathway carbohydrate metabolism; galactose metabolism. This chain is Galactose-1-phosphate uridylyltransferase, found in Ligilactobacillus salivarius (strain UCC118) (Lactobacillus salivarius).